The sequence spans 228 residues: Delta-type opioid receptor (228 aa).

Residues 1-3 (GIV) traverse the membrane as a helical segment. The Cytoplasmic segment spans residues 4–13 (RYTKMKTATN). Residues 14 to 38 (IYIFNLALADALATSTLPFQSAKYL) form a helical membrane-spanning segment. Topologically, residues 39–50 (METWPFGELLCK) are extracellular. Cys49 and Cys126 are oxidised to a cystine. A helical transmembrane segment spans residues 51–72 (AVLSIDYYNMFTSIFTLTMMSV). Residues 73-91 (DRYIAVCHPVKALDFRTPA) lie on the Cytoplasmic side of the membrane. A helical transmembrane segment spans residues 92 to 114 (KAKLINICIWVLASGVGVPIMVM). Over 115–134 (AVTRPRDGAVVCMLQFPSPS) the chain is Extracellular. A helical membrane pass occupies residues 135–166 (WYWDTVTKICVFLFAFVVPILVITVCYGLMLL). Over 167–189 (RLRSVRLLSGSKEKDRSLRRITR) the chain is Cytoplasmic. Residues 190-212 (MVLVVVGAFVVCWAPIHIFVIVW) form a helical membrane-spanning segment. The Extracellular portion of the chain corresponds to 213–227 (TLVDIDRRDPLVVAA).

The protein belongs to the G-protein coupled receptor 1 family. As to quaternary structure, may form homooligomers. Forms a heterodimer with OPRM1. Interacts with GPRASP1. Interacts with RTP4; the interaction promotes cell surface localization of the OPRD1-OPRM1 heterodimer. In terms of processing, ubiquitinated. A basal ubiquitination seems not to be related to degradation. Ubiquitination is increased upon formation of OPRM1:OPRD1 oligomers leading to proteasomal degradation; the ubiquitination is diminished by RTP4. Detected in myenteric plexus and smooth muscle (at protein level). Detected in brain and intestine.

The protein resides in the cell membrane. G-protein coupled receptor that functions as a receptor for endogenous enkephalins and for a subset of other opioids. Ligand binding causes a conformation change that triggers signaling via guanine nucleotide-binding proteins (G proteins) and modulates the activity of down-stream effectors, such as adenylate cyclase. Signaling leads to the inhibition of adenylate cyclase activity. Inhibits neurotransmitter release by reducing calcium ion currents and increasing potassium ion conductance. Plays a role in the perception of pain and in opiate-mediated analgesia. Plays a role in developing analgesic tolerance to morphine. The sequence is that of Delta-type opioid receptor (OPRD1) from Sus scrofa (Pig).